Consider the following 272-residue polypeptide: ATP synthase subunit a (272 aa).

6 helical membrane passes run 41–61 (VLNI…LSIF), 110–130 (FVWV…FPFI), 143–165 (VPSA…ILFY), 188–208 (VFFI…PISL), 222–242 (IFIL…NVPW), and 243–263 (AIFH…LTIV).

The protein belongs to the ATPase A chain family. In terms of assembly, F-type ATPases have 2 components, CF(1) - the catalytic core - and CF(0) - the membrane proton channel. CF(1) has five subunits: alpha(3), beta(3), gamma(1), delta(1), epsilon(1). CF(0) has three main subunits: a(1), b(2) and c(9-12). The alpha and beta chains form an alternating ring which encloses part of the gamma chain. CF(1) is attached to CF(0) by a central stalk formed by the gamma and epsilon chains, while a peripheral stalk is formed by the delta and b chains.

The protein resides in the cell membrane. Its function is as follows. Key component of the proton channel; it plays a direct role in the translocation of protons across the membrane. In Buchnera aphidicola subsp. Schizaphis graminum (strain Sg), this protein is ATP synthase subunit a.